The following is a 497-amino-acid chain: Pseudooxynicotine dehydrogenase (497 aa).

The segment at residues 1 to 43 (MANDKGDISKDGVSRRKFLGGAVIGAAAAAGVGSQILSLSATA) is a signal peptide (tat-type signal). Residues alanine 70, glutamate 89, arginine 97, tryptophan 114, valine 286, serine 462, and isoleucine 472 each coordinate FAD.

The protein belongs to the flavin monoamine oxidase family. Homodimer. Requires FAD as cofactor. Predicted to be exported by the Tat system. The position of the signal peptide cleavage has not been experimentally proven.

Its subcellular location is the periplasm. The catalysed reaction is pseudooxynicotine + 2 Fe(III)-[cytochrome c] + H2O = 4-oxo-4-(pyridin-3-yl)butanal + methylamine + 2 Fe(II)-[cytochrome c] + 2 H(+). It participates in alkaloid degradation; nicotine degradation. Strongly inhibited by Ag(+), Co(2+), Cu(2+) and Hg(2+). Functionally, involved in nicotine degradation. Catalyzes the deamination of pseudooxynicotine to 3-succinoylsemialdehyde-pyridine. The sequence is that of Pseudooxynicotine dehydrogenase from Pseudomonas sp.